The sequence spans 1001 residues: 26S proteasome non-ATPase regulatory subunit 1 homolog B (1001 aa).

At A2 the chain carries N-acetylalanine. A Glycyl lysine isopeptide (Lys-Gly) (interchain with G-Cter in ubiquitin) cross-link involves residue K166. PC repeat units follow at residues 412–447 (SATA…GGSP), 452–485 (GALY…EVIQ), 487–521 (GACL…VAGE), 522–555 (AAGI…EKII), 557–590 (GLAL…IIRY), 591–626 (GGMY…DVRR), 627–659 (TAVL…PHVR), 661–695 (GAAL…FVRQ), 696–736 (GALI…DTMS), and 739–771 (GAIL…TAVI). Disordered stretches follow at residues 853-896 (AKKE…TVEK) and 954-1001 (SLTD…YASP). The segment covering 854–863 (KKEAEQKAKA) has biased composition (basic and acidic residues). The residue at position 889 (S889) is a Phosphoserine. Residues 961 to 985 (STASPAVGAEAAGQAQQAATTSAMA) show a composition bias toward low complexity.

Belongs to the proteasome subunit S1 family. In terms of assembly, component of the 19S regulatory particle (RP/PA700) base subcomplex of the 26S proteasome. The 26S proteasome is composed of a core protease (CP), known as the 20S proteasome, capped at one or both ends by the 19S regulatory particle (RP/PA700). The RP/PA700 complex is composed of at least 17 different subunits in two subcomplexes, the base and the lid, which form the portions proximal and distal to the 20S proteolytic core, respectively.

Functionally, acts as a regulatory subunit of the 26 proteasome which is involved in the ATP-dependent degradation of ubiquitinated proteins. This Arabidopsis thaliana (Mouse-ear cress) protein is 26S proteasome non-ATPase regulatory subunit 1 homolog B (RPN2B).